A 418-amino-acid polypeptide reads, in one-letter code: Protein SSXT (418 aa).

At Ser2 the chain carries N-acetylserine. A transcriptional activation region spans residues 2–186 (SVAFAAPRQR…NQMTMSQGQP (185 aa)). Residues 50 to 53 (YQQM) carry the SH2-binding motif. 2 disordered regions span residues 77–118 (APPT…PAPH) and 188–418 (GNYG…NYQQ). Positions 225–251 (YQGQQPPMGMMGQVNQGNHMMGQRQIP) are enriched in low complexity. A compositionally biased stretch (basic and acidic residues) spans 309-318 (GYDRPYEDSS). Low complexity-rich tracts occupy residues 328–337 (QYGQQQDAYQ), 345–366 (YPPQ…QGYG), and 376–393 (YPNY…YRPT). 2 consecutive repeat copies span residues 344-356 (GYPP…PGQQ) and 357-369 (GYPG…GPSQ). Residues 344–369 (GYPPQQQQYPGQQGYPGQQQGYGPSQ) are 2 X 13 AA imperfect tandem repeats. An SH2-binding motif is present at residues 374-377 (PQYP). An SH3-binding motif is present at residues 392–401 (PTQPGPPQPP). Positions 394–403 (QPGPPQPPQQ) are enriched in pro residues. Residues 404 to 418 (RPYGYDQGQYGNYQQ) are compositionally biased toward low complexity. Residues 413-416 (YGNY) carry the SH2-binding motif.

The protein belongs to the SS18 family. As to quaternary structure, interacts with MLLT10. Isoform 1 interacts with RBM14 isoform 1. Isoform 2 interacts with RBM14 isoform 1. Component of the multiprotein chromatin-remodeling complexes SWI/SNF: SWI/SNF-A (BAF), SWI/SNF-B (PBAF) and related complexes. The canonical complex contains a catalytic subunit (either SMARCA4/BRG1/BAF190A or SMARCA2/BRM/BAF190B) and at least SMARCE1, ACTL6A/BAF53, SMARCC1/BAF155, SMARCC2/BAF170, and SMARCB1/SNF5/BAF47. Other subunits specific to each of the complexes may also be present permitting several possible combinations developmentally and tissue specific. Component of the SWI/SNF (GBAF) subcomplex, which includes at least BICRA or BICRAL (mutually exclusive), BRD9, SS18, the core BAF subunits, SMARCA2/BRM, SMARCA4/BRG1/BAF190A, ACTL6A/BAF53, SMARCC1/BAF155, and SMARCD1/BAF60A. In terms of tissue distribution, fairly ubiquitously expressed. Expressed in synovial sarcomas and in other human cell lines. The fusion genes SSXT-SSX1 and SSXT-SSX2 are expressed only in synovial sarcomas.

The protein resides in the nucleus. In terms of biological role, appears to function synergistically with RBM14 as a transcriptional coactivator. Isoform 1 and isoform 2 function in nuclear receptor coactivation. Isoform 1 and isoform 2 function in general transcriptional coactivation. Component of SWI/SNF chromatin remodeling subcomplex GBAF that carries out key enzymatic activities, changing chromatin structure by altering DNA-histone contacts within a nucleosome in an ATP-dependent manner. The sequence is that of Protein SSXT (SS18) from Homo sapiens (Human).